Consider the following 428-residue polypeptide: C4-dicarboxylate transport protein (428 aa).

Helical transmembrane passes span 8 to 28, 44 to 64, 76 to 96, 142 to 162, 184 to 204, 222 to 242, 326 to 346, and 352 to 372; these read SLYFQVLTAIAIGILLGHFYP, LIKMIIAPVIFCTVVTGIAGM, VALLYFEIVSTIALIIGLIIV, IGAFASGNILQVLLFAVLFGF, VIFGIINMIMRLAPIGAFGAM, LIICFYITCILFVVLVLGSIA, IVHQITLLIVLLLSSKGAAGV, and IVLAATLSAVGHLPVAGLALI.

Belongs to the dicarboxylate/amino acid:cation symporter (DAACS) (TC 2.A.23) family.

The protein resides in the cell inner membrane. Responsible for the transport of dicarboxylates such as succinate, fumarate, and malate from the periplasm across the membrane. The polypeptide is C4-dicarboxylate transport protein (Shigella dysenteriae serotype 1 (strain Sd197)).